We begin with the raw amino-acid sequence, 479 residues long: MFS-type transporter lnaF (479 aa).

11 helical membrane-spanning segments follow: residues 47 to 67 (WIYLVALALFEIGSLVCGFTP), 71 to 91 (GLIIGRAITGLGSAGLFSGAI), 104 to 124 (LLCISVIMCLFGVADVAGPLI), 136 to 156 (WCFYINLPFGGLTALAIVFLL), 177 to 197 (LVGLLFLFPAVICLLLVLSWG), 208 to 228 (IIGLIVGFTALILVFIVVQWW), 250 to 270 (IFSFCITGAMMAFTYHLPIWF), 283 to 303 (LMSIPTILGMTICSLLSAVLV), 306 to 326 (IGFYTPFMYAAPVLSVIGAGL), 344 to 364 (IPFGIGLGIGLSQPMVVVQAV), and 372 to 392 (LAIAITAFMESLGGSVAISVA). Asn416 carries N-linked (GlcNAc...) asparagine glycosylation. The chain crosses the membrane as a helical span at residues 442–462 (LAITQALYVGVALSSLAIVGA).

Belongs to the major facilitator superfamily. TCR/Tet family.

The protein localises to the cell membrane. MFS-type transporter; part of the lnb gene cluster that mediates the biosynthesis of diastereomeric piperazines. Lna and lnb clusters encode sets of enzymes that produce overlapping sets of previously undescribed metabolites such as piperazinomycin-like metabolites or morpholine. The lna and lnb biosynthetic pathways appear to be part of a signaling network that controls the formation of sclerotia, a resilient overwintering structure. May be involved in the secretion of the metabolites produced by the lna and lnb clusters. This Aspergillus flavus (strain ATCC 200026 / FGSC A1120 / IAM 13836 / NRRL 3357 / JCM 12722 / SRRC 167) protein is MFS-type transporter lnaF.